The sequence spans 420 residues: Cell division protein FtsA (420 aa).

The protein belongs to the FtsA/MreB family. As to quaternary structure, self-interacts. Interacts with FtsZ.

Its subcellular location is the cell inner membrane. In terms of biological role, cell division protein that is involved in the assembly of the Z ring. May serve as a membrane anchor for the Z ring. The protein is Cell division protein FtsA of Escherichia coli O157:H7.